Here is a 1177-residue protein sequence, read N- to C-terminus: DNA-directed RNA polymerase subunit beta (1177 aa).

Residues 1147–1161 (DDTEIEMRDTEDDDD) are compositionally biased toward acidic residues. Residues 1147 to 1177 (DDTEIEMRDTEDDDDHQSADKLNVEVETTKE) are disordered. Over residues 1162–1177 (HQSADKLNVEVETTKE) the composition is skewed to basic and acidic residues.

This sequence belongs to the RNA polymerase beta chain family. As to quaternary structure, the RNAP catalytic core consists of 2 alpha, 1 beta, 1 beta' and 1 omega subunit. When a sigma factor is associated with the core the holoenzyme is formed, which can initiate transcription.

The catalysed reaction is RNA(n) + a ribonucleoside 5'-triphosphate = RNA(n+1) + diphosphate. DNA-dependent RNA polymerase catalyzes the transcription of DNA into RNA using the four ribonucleoside triphosphates as substrates. This is DNA-directed RNA polymerase subunit beta from Bacillus thuringiensis (strain Al Hakam).